The sequence spans 213 residues: ATP-dependent dethiobiotin synthetase BioD (213 aa).

Residue G13 to V18 participates in ATP binding. Residue T17 coordinates Mg(2+). K33 is a catalytic residue. E100 is a binding site for Mg(2+). ATP is bound by residues E100 to G103 and P184 to L186.

The protein belongs to the dethiobiotin synthetase family. As to quaternary structure, homodimer. Mg(2+) serves as cofactor.

It localises to the cytoplasm. The catalysed reaction is (7R,8S)-7,8-diammoniononanoate + CO2 + ATP = (4R,5S)-dethiobiotin + ADP + phosphate + 3 H(+). The protein operates within cofactor biosynthesis; biotin biosynthesis; biotin from 7,8-diaminononanoate: step 1/2. In terms of biological role, catalyzes a mechanistically unusual reaction, the ATP-dependent insertion of CO2 between the N7 and N8 nitrogen atoms of 7,8-diaminopelargonic acid (DAPA, also called 7,8-diammoniononanoate) to form a ureido ring. The protein is ATP-dependent dethiobiotin synthetase BioD of Rhodopseudomonas palustris (strain BisA53).